A 238-amino-acid polypeptide reads, in one-letter code: Ribonuclease PH (238 aa).

Residues R86 and 124 to 126 each bind phosphate; that span reads GTR.

The protein belongs to the RNase PH family. In terms of assembly, homohexameric ring arranged as a trimer of dimers.

It catalyses the reaction tRNA(n+1) + phosphate = tRNA(n) + a ribonucleoside 5'-diphosphate. In terms of biological role, phosphorolytic 3'-5' exoribonuclease that plays an important role in tRNA 3'-end maturation. Removes nucleotide residues following the 3'-CCA terminus of tRNAs; can also add nucleotides to the ends of RNA molecules by using nucleoside diphosphates as substrates, but this may not be physiologically important. Probably plays a role in initiation of 16S rRNA degradation (leading to ribosome degradation) during starvation. In Geobacter metallireducens (strain ATCC 53774 / DSM 7210 / GS-15), this protein is Ribonuclease PH.